Consider the following 170-residue polypeptide: RNA polymerase sigma factor TcsR (170 aa).

Positions 122–169 (IKDLTQNEKNILRKIYLHGLRESEISRELNISRQAVNKTHLRALEKLK) are sigma-70 factor domain-4. The segment at residues 143–162 (ESEISRELNISRQAVNKTHL) is a DNA-binding region (H-T-H motif).

The protein belongs to the sigma-70 factor family.

Its function is as follows. Sigma factors are initiation factors that promote the attachment of RNA polymerase to specific initiation sites and are then released. Transcriptional regulator specifically required to activate expression of the toxin gene locus, composed of tcsL and tcdE/utxA. The sequence is that of RNA polymerase sigma factor TcsR from Paraclostridium sordellii (strain ATCC 9714 / DSM 2141 / JCM 3814 / LMG 15708 / NCIMB 10717 / 211) (Clostridium sordellii).